The primary structure comprises 322 residues: Serine/threonine-protein phosphatase PP1-2 (322 aa).

4 residues coordinate Mn(2+): Asp60, His62, Asp88, and Asn120. Catalysis depends on His121, which acts as the Proton donor. Mn(2+) is bound by residues His169 and His244. The tract at residues 298 to 322 (RQRVSQSSIKESKSATNSLKKSKNN) is disordered. Positions 301–316 (VSQSSIKESKSATNSL) are enriched in polar residues.

It belongs to the PPP phosphatase family. PP-1 subfamily. The cofactor is Mn(2+).

The enzyme catalyses O-phospho-L-seryl-[protein] + H2O = L-seryl-[protein] + phosphate. The catalysed reaction is O-phospho-L-threonyl-[protein] + H2O = L-threonyl-[protein] + phosphate. Its function is as follows. Essential role in cell cycle control. PP1 is perhaps required for exit from mitosis. The chain is Serine/threonine-protein phosphatase PP1-2 (sds21) from Schizosaccharomyces pombe (strain 972 / ATCC 24843) (Fission yeast).